The chain runs to 183 residues: Probable cobalt-precorrin-6B C(15)-methyltransferase (decarboxylating) (183 aa).

S-adenosyl-L-methionine is bound by residues T19, 43-47, D64, and A92; that span reads GCGSG.

The protein belongs to the methyltransferase superfamily. Archaeal-type CbiT family.

It catalyses the reaction Co-precorrin-6B + S-adenosyl-L-methionine = Co-precorrin-7 + S-adenosyl-L-homocysteine + CO2. Its pathway is cofactor biosynthesis; adenosylcobalamin biosynthesis; cob(II)yrinate a,c-diamide from sirohydrochlorin (anaerobic route): step 8/10. Functionally, catalyzes the methylation of C-15 in cobalt-precorrin-6B followed by the decarboxylation of C-12 to form cobalt-precorrin-7. The protein is Probable cobalt-precorrin-6B C(15)-methyltransferase (decarboxylating) of Methanocaldococcus jannaschii (strain ATCC 43067 / DSM 2661 / JAL-1 / JCM 10045 / NBRC 100440) (Methanococcus jannaschii).